The chain runs to 407 residues: Probable endo-beta-1,4-glucanase celB (407 aa).

Positions 1 to 18 (MALTLAATALVLLPLVTA) are cleaved as a signal peptide. A glycan (N-linked (GlcNAc...) asparagine) is linked at Asn-136. The Nucleophile role is filled by Glu-216. Catalysis depends on Glu-221, which acts as the Proton donor.

It belongs to the glycosyl hydrolase 7 (cellulase C) family.

It is found in the secreted. It carries out the reaction Endohydrolysis of (1-&gt;4)-beta-D-glucosidic linkages in cellulose, lichenin and cereal beta-D-glucans.. Functionally, has endoglucanase activity on substrates containing beta-1,4 glycosidic bonds, like in carboxymethylcellulose (CMC), hydroxyethylcellulose (HEC) and beta-glucan. Involved in the degradation of complex natural cellulosic substrates. This Neosartorya fischeri (strain ATCC 1020 / DSM 3700 / CBS 544.65 / FGSC A1164 / JCM 1740 / NRRL 181 / WB 181) (Aspergillus fischerianus) protein is Probable endo-beta-1,4-glucanase celB (celB).